Consider the following 1486-residue polypeptide: Rap guanine nucleotide exchange factor 2 (1486 aa).

2 disordered regions span residues H40–L59 and S68–L101. Over residues V83–I94 the composition is skewed to acidic residues. A135–V252 contributes to the a nucleoside 3',5'-cyclic phosphate binding site. The N-terminal Ras-GEF domain occupies K267–K380. Residues L385–F468 form the PDZ domain. Phosphoserine is present on S501. The Ras-associating domain maps to P606–E692. A Phosphothreonine modification is found at T644. The Ras-GEF domain maps to S717–L944. 4 positions are modified to phosphoserine: S806, S930, S933, and S1022. The disordered stretch occupies residues P1002–Q1049. Positions Q1035–P1044 are enriched in pro residues. Phosphoserine is present on residues S1077, S1086, S1092, S1113, S1117, S1156, and S1173. Disordered stretches follow at residues E1090–I1176, P1221–H1254, K1303–S1357, and G1391–V1486. Composition is skewed to low complexity over residues S1105 to P1122 and S1138 to S1159. 2 stretches are compositionally biased toward polar residues: residues G1244–H1254 and Y1304–G1328. The span at A1475 to V1486 shows a compositional bias: acidic residues.

Belongs to the RAPGEF2 family. Found in a complex, at least composed of KIDINS220, MAGI2, NTRK1 and RAPGEF2; the complex is mainly formed at late endosomes in a neuronal growth factor (NGF)-dependent manner. Interacts (via C-terminal domain) with NEDD4 (via WW domains); this interaction leads to ubiquitination and degradation via the proteasome pathway in a cAMP-independent manner. Interacts with MAGI1 (via PDZ domain). Interacts with ADRB1 (via C-terminal PDZ motif); the interaction is direct. Interacts (via Ras-associating domain) with RAP1A (via GTP-bound active form). Interacts weakly with HRAS (via GDP- and GTP-bound forms). Interacts (via C-terminal domain) with MAGI2 (via PDZ and WW domains). Interacts with CDH1 and TJP1. Interacts with CTNNB1. Ubiquitinated by NEDD4, leading to proteasomal degradation. In terms of processing, phosphorylation by PLK2 promotes its activity.

It is found in the cytoplasm. Its subcellular location is the perinuclear region. It localises to the cell membrane. The protein resides in the late endosome. The protein localises to the cell junction. Functions as a guanine nucleotide exchange factor (GEF), which activates Rap and Ras family of small GTPases by exchanging bound GDP for free GTP in a cAMP-dependent manner. Serves as a link between cell surface receptors and Rap/Ras GTPases in intracellular signaling cascades. Also acts as an effector for Rap1 by direct association with Rap1-GTP thereby leading to the amplification of Rap1-mediated signaling. Shows weak activity on HRAS. It is controversial whether RAPGEF2 binds cAMP and cGMP or not. Its binding to ligand-activated beta-1 adrenergic receptor ADRB1 leads to the Ras activation through the G(s)-alpha signaling pathway. Involved in the cAMP-induced Ras and Erk1/2 signaling pathway that leads to sustained inhibition of long term melanogenesis by reducing dendrite extension and melanin synthesis. Also provides inhibitory signals for cell proliferation of melanoma cells and promotes their apoptosis in a cAMP-independent nanner. Regulates cAMP-induced neuritogenesis by mediating the Rap1/B-Raf/ERK signaling through a pathway that is independent on both PKA and RAPGEF3/RAPGEF4. Involved in neuron migration and in the formation of the major forebrain fiber connections forming the corpus callosum, the anterior commissure and the hippocampal commissure during brain development. Involved in neuronal growth factor (NGF)-induced sustained activation of Rap1 at late endosomes and in brain-derived neurotrophic factor (BDNF)-induced axon outgrowth of hippocampal neurons. Plays a role in the regulation of embryonic blood vessel formation and in the establishment of basal junction integrity and endothelial barrier function. May be involved in the regulation of the vascular endothelial growth factor receptor KDR and cadherin CDH5 expression at allantois endothelial cell-cell junctions. Binds to cAMP. This Bos taurus (Bovine) protein is Rap guanine nucleotide exchange factor 2 (RAPGEF2).